The primary structure comprises 217 residues: Chorionic somatomammotropin hormone 1 (217 aa).

The signal sequence occupies residues Met1 to Ala26. Residue His44 participates in Zn(2+) binding. A disulfide bond links Cys79 and Cys191. Glu200 is a Zn(2+) binding site. Cys208 and Cys215 are oxidised to a cystine.

The protein belongs to the somatotropin/prolactin family. As to quaternary structure, can be found in a monomeric as well as dimeric form.

It is found in the secreted. In terms of biological role, produced only during pregnancy and is involved in stimulating lactation, fetal growth and metabolism. Does not interact with GHR but only activates PRLR through zinc-induced dimerization. The sequence is that of Chorionic somatomammotropin hormone 1 (CSH1) from Homo sapiens (Human).